Here is a 448-residue protein sequence, read N- to C-terminus: Protein EVI2B (448 aa).

A signal peptide spans 1 to 21 (MDPKYFILILFCGHLNNTFFS). Residues N16 and N50 are each glycosylated (N-linked (GlcNAc...) asparagine). At 22–202 (KTETITTEKQ…QTPQKNNYNS (181 aa)) the chain is on the extracellular side. The segment at 74–108 (AKVTAGQPTPAVYTSSEKPEAHTSAGQPLAYNTKQ) is disordered. Polar residues predominate over residues 97–108 (SAGQPLAYNTKQ). An N-linked (GlcNAc...) asparagine glycan is attached at N114. A helical transmembrane segment spans residues 203-226 (IAAILIGVLLTSMLVAIIIIVLWK). At 227–448 (CLRKPVLNDQ…SLPPPPAELL (222 aa)) the chain is on the cytoplasmic side. T249 carries the post-translational modification Phosphothreonine. S268, S271, S278, and S294 each carry phosphoserine. 2 disordered regions span residues 298–372 (IEDS…DSTS) and 427–448 (SIPP…AELL). Composition is skewed to polar residues over residues 313–333 (VNGT…VSSS) and 350–372 (QESN…DSTS).

In terms of tissue distribution, bone marrow, peripheral blood mononuclear cells, fibroblasts and Epstein-Barr virus-transformed lymphoblastoid cell lines. Strongly expressed in granulocytic cells, and weakly on lymphocytes cells.

The protein resides in the membrane. In terms of biological role, required for granulocyte differentiation and functionality of hematopoietic progenitor cells through the control of cell cycle progression and survival of hematopoietic progenitor cells. In Homo sapiens (Human), this protein is Protein EVI2B.